The primary structure comprises 29 residues: MDIISLAWAALMVVFTFSLSLVVWGRSGL.

A helical transmembrane segment spans residues 3 to 23 (IISLAWAALMVVFTFSLSLVV).

It belongs to the PetN family. In terms of assembly, the 4 large subunits of the cytochrome b6-f complex are cytochrome b6, subunit IV (17 kDa polypeptide, PetD), cytochrome f and the Rieske protein, while the 4 small subunits are PetG, PetL, PetM and PetN. The complex functions as a dimer.

It localises to the plastid. It is found in the chloroplast thylakoid membrane. Its function is as follows. Component of the cytochrome b6-f complex, which mediates electron transfer between photosystem II (PSII) and photosystem I (PSI), cyclic electron flow around PSI, and state transitions. In Nicotiana tomentosiformis (Tobacco), this protein is Cytochrome b6-f complex subunit 8.